A 408-amino-acid polypeptide reads, in one-letter code: tRNA(Met) cytidine acetate ligase (408 aa).

Residues 7–20 (IVEY…HKYH), glycine 102, asparagine 170, and 195–196 (RI) each bind ATP.

It belongs to the TmcAL family.

Its subcellular location is the cytoplasm. It carries out the reaction cytidine(34) in elongator tRNA(Met) + acetate + ATP = N(4)-acetylcytidine(34) in elongator tRNA(Met) + AMP + diphosphate. Its function is as follows. Catalyzes the formation of N(4)-acetylcytidine (ac(4)C) at the wobble position of elongator tRNA(Met), using acetate and ATP as substrates. First activates an acetate ion to form acetyladenylate (Ac-AMP) and then transfers the acetyl group to tRNA to form ac(4)C34. This chain is tRNA(Met) cytidine acetate ligase, found in Clostridium kluyveri (strain NBRC 12016).